The chain runs to 100 residues: NAD(P)H-quinone oxidoreductase subunit 4L, chloroplastic (100 aa).

A run of 3 helical transmembrane segments spans residues 1-21 (MLEH…YGLI), 29-49 (ALMC…TFSN), and 63-83 (IFVT…ALAI).

This sequence belongs to the complex I subunit 4L family. In terms of assembly, NDH is composed of at least 16 different subunits, 5 of which are encoded in the nucleus.

The protein resides in the plastid. It localises to the chloroplast thylakoid membrane. The catalysed reaction is a plastoquinone + NADH + (n+1) H(+)(in) = a plastoquinol + NAD(+) + n H(+)(out). It carries out the reaction a plastoquinone + NADPH + (n+1) H(+)(in) = a plastoquinol + NADP(+) + n H(+)(out). Functionally, NDH shuttles electrons from NAD(P)H:plastoquinone, via FMN and iron-sulfur (Fe-S) centers, to quinones in the photosynthetic chain and possibly in a chloroplast respiratory chain. The immediate electron acceptor for the enzyme in this species is believed to be plastoquinone. Couples the redox reaction to proton translocation, and thus conserves the redox energy in a proton gradient. This Cycas taitungensis (Prince sago) protein is NAD(P)H-quinone oxidoreductase subunit 4L, chloroplastic.